We begin with the raw amino-acid sequence, 830 residues long: Pentatricopeptide repeat-containing protein At5g55740, chloroplastic (830 aa).

The N-terminal 59 residues, 1 to 59 (MASLPFNTIPNKVPFSVSSKPSSKHHDEQAHSPSSTSYFHRVSSLCKNGEIKEALSLVT), are a transit peptide targeting the chloroplast. Residues 15-36 (FSVSSKPSSKHHDEQAHSPSST) are disordered. PPR repeat units follow at residues 69 to 103 (GPEIYGEILQGCVYERDLSTGKQIHARILKNGDFY), 106 to 136 (NEYIETKLVIFYAKCDALEIAEVLFSKLRVR), 137 to 171 (NVFSWAAIIGVKCRIGLCEGALMGFVEMLENEIFP), 172 to 206 (DNFVVPNVCKACGALKWSRFGRGVHGYVVKSGLED), 207 to 237 (CVFVASSLADMYGKCGVLDDASKVFDEIPDR), 238 to 272 (NAVAWNALMVGYVQNGKNEEAIRLFSDMRKQGVEP), 273 to 307 (TRVTVSTCLSASANMGGVEEGKQSHAIAIVNGMEL), 308 to 338 (DNILGTSLLNFYCKVGLIEYAEMVFDRMFEK), 339 to 373 (DVVTWNLIISGYVQQGLVEDAIYMCQLMRLEKLKY), 374 to 408 (DCVTLATLMSAAARTENLKLGKEVQCYCIRHSFES), 409 to 439 (DIVLASTVMDMYAKCGSIVDAKKVFDSTVEK), 440 to 474 (DLILWNTLLAAYAESGLSGEALRLFYGMQLEGVPP), 475 to 509 (NVITWNLIILSLLRNGQVDEAKDMFLQMQSSGIIP), 510 to 544 (NLISWTTMMNGMVQNGCSEEAILFLRKMQESGLRP), 545 to 575 (NAFSITVALSACAHLASLHIGRTIHGYIIRN), 581 to 611 (LVSIETSLVDMYAKCGDINKAEKVFGSKLYS), 612 to 646 (ELPLSNAMISAYALYGNLKEAIALYRSLEGVGLKP), 647 to 682 (DNITITNVLSACNHAGDINQAIEIFTDIVSKRSMKP), and 683 to 713 (CLEHYGLMVDLLASAGETEKALRLIEEMPFK). The type E motif stretch occupies residues 718–793 (MIQSLVASCN…KPGCSWIQIT (76 aa)). The interval 796-826 (EGVHVFVANDKTHTRINEIQMMLALLLYDMG) is type E(+) motif.

This sequence belongs to the PPR family. PCMP-E subfamily.

The protein resides in the plastid. It localises to the chloroplast. Plays a major role in chloroplast RNA editing. Acts as a site-recognition transacting factor involved in the edition of the site 2 of ndhD (ndhD-2), which encodes a subunit of the NDH complex. The polypeptide is Pentatricopeptide repeat-containing protein At5g55740, chloroplastic (CRR21) (Arabidopsis thaliana (Mouse-ear cress)).